The chain runs to 252 residues: MEGHVYWTDDEVWAIRRAYLDGSGAQTLINTKINDPDDIAVNWVARSLYWTHTGTEHIEVTCLNSTSHKILVSEDMDEPRAIALHPEMGLTYWIDWGENPEIKRANLDRQELRVLVNASLGWPNGLALDLQEGKLYWGDAKTDKIEAISVDETKRQTLLKDKLPHIFRFTLLGDFIYWTAWQHHSIKRVHKVKANRDVIIDQLPDLMGLKAVNVDKVVGTNPHADRNGGAATCASSRPTQPGLAAPSRAWNC.

LDL-receptor class B repeat units follow at residues 3 to 45 (GHVY…NWVA), 46 to 88 (RSLY…HPEM), 89 to 132 (GLTY…DLQE), 133 to 175 (GKLY…LGDF), and 176 to 218 (IYWT…DKVV). Positions 223 to 247 (HADRNGGAATCASSRPTQPGLAAPS) are disordered.

This chain is Low-density lipoprotein receptor-related protein 5-like protein (LRP5L), found in Homo sapiens (Human).